We begin with the raw amino-acid sequence, 495 residues long: Acyltransferase abl6 (495 aa).

H171 (proton acceptor) is an active-site residue.

It belongs to the plant acyltransferase family.

Its function is as follows. Acyltransferase; part of the gene cluster that mediates the biosynthesis of abscisic acid (ABA), a phytohormone that acts antagonistically toward salicylic acid (SA), jasmonic acid (JA) and ethylene (ETH) signaling, to impede plant defense responses. The first step of the pathway catalyzes the reaction from farnesyl diphosphate to alpha-ionylideneethane performed by the alpha-ionylideneethane synthase abl3 via a three-step reaction mechanism involving 2 neutral intermediates, beta-farnesene and allofarnesene. The cytochrome P450 monooxygenase abl1 might then be involved in the conversion of alpha-ionylideneethane to alpha-ionylideneacetic acid. Alpha-ionylideneacetic acid is further converted to abscisic acid in 2 steps involving the cytochrome P450 monooxygenase abl2 and the short-chain dehydrogenase/reductase abl4, via the intermediates 1'-deoxy-ABA or 1',4'-trans-diol-ABA, depending on the order of action of these 2 enzymes. Abl2 is responsible for the hydroxylation of carbon atom C-1' and abl4 might be involved in the oxidation of the C-4' carbon atom. The acyltransferase abl6 seems not essential for the biosynthesis of ABA, but it may acetylate ABA as part of the synthesis of another ABA-related molecule. This is Acyltransferase abl6 from Leptosphaeria maculans (strain JN3 / isolate v23.1.3 / race Av1-4-5-6-7-8) (Blackleg fungus).